The primary structure comprises 459 residues: Cysteine--tRNA ligase (459 aa).

A Zn(2+)-binding site is contributed by cysteine 27. The 'HIGH' region signature appears at 29 to 39 (VTVYDDCHIGH). Cysteine 208, histidine 233, and glutamate 237 together coordinate Zn(2+). The 'KMSKS' region signature appears at 265–269 (KMSKS). Position 268 (lysine 268) interacts with ATP.

The protein belongs to the class-I aminoacyl-tRNA synthetase family. As to quaternary structure, monomer. Zn(2+) serves as cofactor.

The protein localises to the cytoplasm. It carries out the reaction tRNA(Cys) + L-cysteine + ATP = L-cysteinyl-tRNA(Cys) + AMP + diphosphate. The sequence is that of Cysteine--tRNA ligase from Francisella tularensis subsp. mediasiatica (strain FSC147).